Here is a 330-residue protein sequence, read N- to C-terminus: Inactive hydroxysteroid dehydrogenase-like protein 1 (330 aa).

A2 carries the N-acetylalanine modification. The tract at residues 2 to 82 is required for mitochondria translocation; the sequence is AAVDSFYLLY…SGATDGIGRA (81 aa). NADP(+) contacts are provided by residues 74–80, D125, and K222; that span reads GATDGIG.

The protein belongs to the short-chain dehydrogenases/reductases (SDR) family. 17-beta-HSD 3 subfamily. As to quaternary structure, interacts with STYXL1.

It is found in the mitochondrion. This chain is Inactive hydroxysteroid dehydrogenase-like protein 1 (HSDL1), found in Pongo abelii (Sumatran orangutan).